The following is a 201-amino-acid chain: PLASMODESMATA CALLOSE-BINDING PROTEIN 1 (201 aa).

The first 19 residues, 1 to 19, serve as a signal peptide directing secretion; that stretch reads MAALVLSLLLLSLAGHSSA. A disulfide bridge connects residues Cys-22 and Cys-84. Low complexity predominate over residues 107-141; that stretch reads SASGSSGSTTVTPGTTNPKGSPTTTTLPGSGTNSP. Residues 107–164 are disordered; sequence SASGSSGSTTVTPGTTNPKGSPTTTTLPGSGTNSPYSGNPTNGVFGGNSTGGTTGTGI. Over residues 150 to 161 the composition is skewed to gly residues; sequence VFGGNSTGGTTG. Asn-154 carries an N-linked (GlcNAc...) asparagine glycan. Ser-172 carries the GPI-anchor amidated serine lipid modification. Positions 173–201 are cleaved as a propeptide — removed in mature form; sequence SAFALKNSSKLFICLLLIASSGFCSFLML. Asn-179 is a glycosylation site (N-linked (GlcNAc...) asparagine).

In terms of processing, contains two additional disulfide bonds. In terms of tissue distribution, expressed in the shoot apical region and in young leaves but also detected in the laminar and vasculature of mature leaves.

It localises to the cell membrane. The protein resides in the cell junction. The protein localises to the plasmodesma. Its function is as follows. Able to bind (1-&gt;3)-beta-D-glucans (laminarin). Probably involved in cell-to-cell trafficking regulation. This Arabidopsis thaliana (Mouse-ear cress) protein is PLASMODESMATA CALLOSE-BINDING PROTEIN 1 (PDCB1).